We begin with the raw amino-acid sequence, 92 residues long: MKILLAIALMLSTVMWVSTQQPQGVHTYCGRHLARTLANLCWEAGVDKRSDAQYVSYGSAWLMPYSEGRGKRGIVDECCLRPCSVDVLLSYC.

The signal sequence occupies residues methionine 1 to threonine 19. Pyrrolidone carboxylic acid is present on glutamine 20. 3 disulfides stabilise this stretch: cysteine 29–cysteine 79, cysteine 41–cysteine 92, and cysteine 78–cysteine 83. Positions serine 50 to glycine 70 are cleaved as a propeptide — c peptide like.

It belongs to the insulin family. In terms of assembly, heterodimer of a B chain and an A chain linked by two disulfide bonds.

It localises to the secreted. Its function is as follows. Brain peptide responsible for activation of prothoracic glands to produce ecdysone in insects. The chain is Bombyxin A-3 (BBXA3) from Bombyx mori (Silk moth).